Consider the following 157-residue polypeptide: 2-C-methyl-D-erythritol 2,4-cyclodiphosphate synthase (157 aa).

Residues Asp-8 and His-10 each contribute to the a divalent metal cation site. 4-CDP-2-C-methyl-D-erythritol 2-phosphate-binding positions include Asp-8–His-10 and His-35–Ser-36. Residue His-43 coordinates a divalent metal cation. 4-CDP-2-C-methyl-D-erythritol 2-phosphate is bound by residues Asp-57 to Gly-59, Phe-62 to Asp-66, and Lys-142.

Belongs to the IspF family. Homotrimer. A divalent metal cation is required as a cofactor.

It carries out the reaction 4-CDP-2-C-methyl-D-erythritol 2-phosphate = 2-C-methyl-D-erythritol 2,4-cyclic diphosphate + CMP. It functions in the pathway isoprenoid biosynthesis; isopentenyl diphosphate biosynthesis via DXP pathway; isopentenyl diphosphate from 1-deoxy-D-xylulose 5-phosphate: step 4/6. Functionally, involved in the biosynthesis of isopentenyl diphosphate (IPP) and dimethylallyl diphosphate (DMAPP), two major building blocks of isoprenoid compounds. Catalyzes the conversion of 4-diphosphocytidyl-2-C-methyl-D-erythritol 2-phosphate (CDP-ME2P) to 2-C-methyl-D-erythritol 2,4-cyclodiphosphate (ME-CPP) with a corresponding release of cytidine 5-monophosphate (CMP). This is 2-C-methyl-D-erythritol 2,4-cyclodiphosphate synthase from Wigglesworthia glossinidia brevipalpis.